Reading from the N-terminus, the 341-residue chain is ATP-dependent 6-phosphofructokinase 2 (341 aa).

Residues Gly-10, Arg-72–Leu-73, and Gly-102–Thr-105 contribute to the ATP site. Residue Glu-103 participates in Mg(2+) binding. Substrate contacts are provided by residues Thr-125–Asp-127, Arg-162, Met-169–Arg-171, Glu-222, Lys-266, and His-272–Arg-275. The Proton acceptor role is filled by Asp-127.

It belongs to the phosphofructokinase type A (PFKA) family. Mixed-substrate PFK group III subfamily. In terms of assembly, homodimer or homotetramer. Mg(2+) is required as a cofactor.

It localises to the cytoplasm. It catalyses the reaction beta-D-fructose 6-phosphate + ATP = beta-D-fructose 1,6-bisphosphate + ADP + H(+). The protein operates within carbohydrate degradation; glycolysis; D-glyceraldehyde 3-phosphate and glycerone phosphate from D-glucose: step 3/4. Allosterically inhibited by phosphoenolpyruvate. Catalyzes the phosphorylation of D-fructose 6-phosphate to fructose 1,6-bisphosphate by ATP, the first committing step of glycolysis. The polypeptide is ATP-dependent 6-phosphofructokinase 2 (Streptomyces coelicolor (strain ATCC BAA-471 / A3(2) / M145)).